We begin with the raw amino-acid sequence, 128 residues long: uncharacterized protein (128 aa).

This is an uncharacterized protein from Methanocaldococcus jannaschii (strain ATCC 43067 / DSM 2661 / JAL-1 / JCM 10045 / NBRC 100440) (Methanococcus jannaschii).